The primary structure comprises 343 residues: MNEITIIKPDDWHLHFRDQDMLLETVAATARCFERAVVMPNLVPPVTTAELALSYKERILAARPAGSTFMPVMTIYLTDKTSVQDIQDAKKAGVLAAKMYPAGATTNSDSGVNSLESLYPVFEALADNGMLLLIHGEVTQKHIDIFDREKEFIDQHMVNIVDRVPNLKVVFEHITTKDAVDFVLAARDGVAATITPQHLLLNRNDMLDGGVRPHNYCLPVLKRSTHQQALREVVKSGSPKFFLGTDSAPHAKHRKESDCGCAGCYSAWSALELYTQVFDELGALDKLEGFASLYGADFYGLPRNTEKVTLVRESWEVPNSITLPNGEPIVPFFAGKQISWKLK.

2 residues coordinate Zn(2+): His13 and His15. Substrate contacts are provided by residues 15–17 and Asn41; that span reads HFR. Zn(2+) contacts are provided by Lys98, His135, and His173. Residue Lys98 is modified to N6-carboxylysine. Residue His135 coordinates substrate. Residue Leu218 coordinates substrate. Asp246 provides a ligand contact to Zn(2+). The active site involves Asp246. His250 and Ala262 together coordinate substrate.

This sequence belongs to the metallo-dependent hydrolases superfamily. DHOase family. Class II DHOase subfamily. Homodimer. Zn(2+) is required as a cofactor.

It carries out the reaction (S)-dihydroorotate + H2O = N-carbamoyl-L-aspartate + H(+). The protein operates within pyrimidine metabolism; UMP biosynthesis via de novo pathway; (S)-dihydroorotate from bicarbonate: step 3/3. Catalyzes the reversible cyclization of carbamoyl aspartate to dihydroorotate. The sequence is that of Dihydroorotase from Marinomonas sp. (strain MWYL1).